Consider the following 176-residue polypeptide: Protein tyrosine phosphatase PRL-1 (176 aa).

The region spanning 13–165 (GESDAVVFRF…YKPRHQEGNE (153 aa)) is the Tyrosine-protein phosphatase domain. C52 and C107 are disulfide-bonded. D75 (proton donor) is an active-site residue. The active-site Phosphocysteine intermediate is the C107. Substrate is bound at residue 109 to 113 (AGLGR). A Cysteine methyl ester modification is found at C173. C173 carries S-farnesyl cysteine lipidation. The propeptide at 174-176 (AVM) is removed in mature form.

It belongs to the protein-tyrosine phosphatase family.

Its subcellular location is the flagellar pocket. It catalyses the reaction O-phospho-L-tyrosyl-[protein] + H2O = L-tyrosyl-[protein] + phosphate. Its activity is regulated as follows. Activated in a reduced environment which promotes the reduction of the disulfide bond between the regulatory Cys-52 and the catalytic Cys-107 residues. Inhibited by sodium orthovanadate. Has protein tyrosine phosphatase activity. The protein is Protein tyrosine phosphatase PRL-1 of Trypanosoma cruzi (strain CL Brener).